Consider the following 424-residue polypeptide: Glutamate-1-semialdehyde 2,1-aminomutase (424 aa).

At lysine 263 the chain carries N6-(pyridoxal phosphate)lysine.

This sequence belongs to the class-III pyridoxal-phosphate-dependent aminotransferase family. HemL subfamily. Homodimer. Pyridoxal 5'-phosphate serves as cofactor.

Its subcellular location is the cytoplasm. It catalyses the reaction (S)-4-amino-5-oxopentanoate = 5-aminolevulinate. Its pathway is porphyrin-containing compound metabolism; protoporphyrin-IX biosynthesis; 5-aminolevulinate from L-glutamyl-tRNA(Glu): step 2/2. The protein is Glutamate-1-semialdehyde 2,1-aminomutase of Campylobacter jejuni subsp. jejuni serotype O:6 (strain 81116 / NCTC 11828).